The sequence spans 317 residues: Melanocyte-stimulating hormone receptor (317 aa).

Topologically, residues 1–37 are extracellular; it reads MPAQGSQRGLLGAVNFTPTATPHLRPAANQTGPQCLE. Residue Asn-29 is glycosylated (N-linked (GlcNAc...) asparagine). A helical membrane pass occupies residues 38–63; that stretch reads VSVPDGLFLCLGLVSLVENTLVVAAI. The Cytoplasmic portion of the chain corresponds to 64-72; the sequence is AKNRNLHSP. A helical membrane pass occupies residues 73 to 93; it reads MYCFICCLALSDLLVSVSNLL. The Extracellular portion of the chain corresponds to 94-118; it reads ETAVLLLLEVGALAAQATVVQQLGN. Residues 119–140 form a helical membrane-spanning segment; sequence VIDVLICSSMVSSLCSLGAIAM. Residues 141–163 are Cytoplasmic-facing; sequence DRYISIFYALRYHSIVTLARARR. The chain crosses the membrane as a helical span at residues 164–183; that stretch reads AIAAVWAASILSSTLFITYY. Topologically, residues 184-191 are extracellular; that stretch reads DRTAALLC. A helical transmembrane segment spans residues 192-211; it reads LVVFFLAMLVLMALLYVHML. The Cytoplasmic segment spans residues 212 to 240; it reads IQACQHAQAIARLHKRQHPVQQGWGLKGA. Residues 241–266 form a helical membrane-spanning segment; it reads ATLTILLGVFFLCWGPFFLHLTLIAV. Residues 267–279 lie on the Extracellular side of the membrane; that stretch reads CPQHPTCSCIFKN. Residues 280–300 form a helical membrane-spanning segment; the sequence is FRLFLALIICNTIVDPLIYAF. Over 301-317 the chain is Cytoplasmic; the sequence is RSQELRRTLKEVLLFSW.

This sequence belongs to the G-protein coupled receptor 1 family. In terms of assembly, interacts with MGRN1, but does not undergo MGRN1-mediated ubiquitination; this interaction competes with GNAS-binding and thus inhibits agonist-induced cAMP production. Interacts with OPN3; the interaction results in a decrease in MC1R-mediated cAMP signaling and ultimately a decrease in melanin production in melanocytes.

The protein localises to the cell membrane. Functionally, receptor for MSH (alpha, beta and gamma) and ACTH. The activity of this receptor is mediated by G proteins which activate adenylate cyclase. Mediates melanogenesis, the production of eumelanin (black/brown) and phaeomelanin (red/yellow), via regulation of cAMP signaling in melanocytes. The polypeptide is Melanocyte-stimulating hormone receptor (MC1R) (Eulemur fulvus fulvus (Brown lemur)).